The chain runs to 226 residues: Probable C4-dicarboxylate response regulator DctR (226 aa).

The region spanning 7-123 (KVLLIEDDPM…RMRQALEKYK (117 aa)) is the Response regulatory domain. Asp-58 carries the post-translational modification 4-aspartylphosphate. Positions 179–198 (AEEVAKALGIARVTARRYLD) form a DNA-binding region, H-T-H motif.

Phosphorylated by DctS.

Its subcellular location is the cytoplasm. In terms of biological role, member of the two-component regulatory system DctS/DctR. Essential for expression of dctP. This chain is Probable C4-dicarboxylate response regulator DctR (dctR), found in Bacillus subtilis (strain 168).